We begin with the raw amino-acid sequence, 341 residues long: L-threonine 3-dehydrogenase (341 aa).

Cysteine 38 provides a ligand contact to Zn(2+). Residues threonine 40 and histidine 43 each act as charge relay system in the active site. Positions 63, 64, 93, 96, 99, and 107 each coordinate Zn(2+). NAD(+) is bound by residues isoleucine 175, aspartate 195, arginine 200, 262 to 264 (LGI), and 286 to 287 (IY).

The protein belongs to the zinc-containing alcohol dehydrogenase family. As to quaternary structure, homotetramer. Zn(2+) serves as cofactor.

The protein resides in the cytoplasm. It catalyses the reaction L-threonine + NAD(+) = (2S)-2-amino-3-oxobutanoate + NADH + H(+). Its pathway is amino-acid degradation; L-threonine degradation via oxydo-reductase pathway; glycine from L-threonine: step 1/2. In terms of biological role, catalyzes the NAD(+)-dependent oxidation of L-threonine to 2-amino-3-ketobutyrate. The polypeptide is L-threonine 3-dehydrogenase (Shigella sonnei (strain Ss046)).